We begin with the raw amino-acid sequence, 516 residues long: Maturase K (516 aa).

It belongs to the intron maturase 2 family. MatK subfamily.

The protein resides in the plastid. It is found in the chloroplast. Usually encoded in the trnK tRNA gene intron. Probably assists in splicing its own and other chloroplast group II introns. This Chara vulgaris (Common stonewort) protein is Maturase K.